A 398-amino-acid chain; its full sequence is Neuroplastin (398 aa).

An N-terminal signal peptide occupies residues 1 to 28; the sequence is MSGSSLPSALALSLLLVSGSLLPGPGAA. Ig-like domains lie at 29–134, 148–235, and 238–329; these read QNAG…PSIT, PRIV…IEVK, and PDIT…SVVT. Over 29-339 the chain is Extracellular; the sequence is QNAGFVKSPM…VLRVRSHLAP (311 aa). Cysteine 52 and cysteine 116 are disulfide-bonded. The narpin; mediates binding with FGFR1 and has antidepressant-like activity stretch occupies residues 149-161; that stretch reads RIVTSEEVIIRDS. A disulfide bridge links cysteine 170 with cysteine 218. N-linked (GlcNAc...) asparagine glycosylation is found at asparagine 171, asparagine 197, asparagine 229, asparagine 284, asparagine 296, and asparagine 317. Cysteine 259 and cysteine 316 are joined by a disulfide. A helical membrane pass occupies residues 340–360; that stretch reads LWPFLGILAEIIILVVIIVVY. The Cytoplasmic segment spans residues 361–398; sequence EKRKRPDEVPDDDEPAGPMKTNSTNNHKDKNLRQRNTN. The disordered stretch occupies residues 365–398; it reads RPDEVPDDDEPAGPMKTNSTNNHKDKNLRQRNTN.

Interacts with ATP2B1; this interaction stabilizes ATP2B1 and increases ATPase activity; this interaction controls T cell calcium homeostasis following T cell activation. Interacts with XKR8; promoting its localization at the cell membrane. Isoform 1 is ubiquitously expressed. Isoform 2 is expressed in brain cortex and cerebellum (at protein level).

Its subcellular location is the cell membrane. The protein resides in the postsynaptic density. Functionally, probable homophilic and heterophilic cell adhesion molecule involved in long term potentiation at hippocampal excitatory synapses through activation of p38MAPK. May also regulate neurite outgrowth by activating the FGFR1 signaling pathway. May play a role in synaptic plasticity. Also acts as a chaperone for ATP2B1; stabilizes ATP2B1 and increases its ATPase activity. Promotes localization of XKR8 at the cell membrane. This chain is Neuroplastin (NPTN), found in Homo sapiens (Human).